Reading from the N-terminus, the 511-residue chain is Coatomer subunit delta (511 aa).

Over residues 168-177 the composition is skewed to basic and acidic residues; sequence QARRDAERQG. Residues 168-188 form a disordered region; sequence QARRDAERQGKKAPGFGGFGS. Residue S223 is modified to Phosphoserine. An N6-acetyllysine mark is found at K233 and K241. S244 is modified (phosphoserine). The region spanning 271-511 is the MHD domain; that stretch reads MESVHMKIEE…TFLVDKYEIL (241 aa). Residues K309 and K351 each carry the N6-acetyllysine modification. S493 is subject to Phosphoserine.

This sequence belongs to the adaptor complexes medium subunit family. Delta-COP subfamily. As to quaternary structure, oligomeric complex that consists of at least the alpha, beta, beta', gamma, delta, epsilon and zeta subunits.

It is found in the cytoplasm. The protein localises to the golgi apparatus membrane. It localises to the cytoplasmic vesicle. Its subcellular location is the COPI-coated vesicle membrane. In terms of biological role, the coatomer is a cytosolic protein complex that binds to dilysine motifs and reversibly associates with Golgi non-clathrin-coated vesicles, which further mediate biosynthetic protein transport from the ER, via the Golgi up to the trans Golgi network. Coatomer complex is required for budding from Golgi membranes, and is essential for the retrograde Golgi-to-ER transport of dilysine-tagged proteins. In mammals, the coatomer can only be recruited by membranes associated to ADP-ribosylation factors (ARFs), which are small GTP-binding proteins; the complex also influences the Golgi structural integrity, as well as the processing, activity, and endocytic recycling of LDL receptors. In Rattus norvegicus (Rat), this protein is Coatomer subunit delta (Arcn1).